The primary structure comprises 881 residues: Alanine--tRNA ligase (881 aa).

Residues H568, H572, C670, and H674 each contribute to the Zn(2+) site.

Belongs to the class-II aminoacyl-tRNA synthetase family. It depends on Zn(2+) as a cofactor.

The protein localises to the cytoplasm. It catalyses the reaction tRNA(Ala) + L-alanine + ATP = L-alanyl-tRNA(Ala) + AMP + diphosphate. Its function is as follows. Catalyzes the attachment of alanine to tRNA(Ala) in a two-step reaction: alanine is first activated by ATP to form Ala-AMP and then transferred to the acceptor end of tRNA(Ala). Also edits incorrectly charged Ser-tRNA(Ala) and Gly-tRNA(Ala) via its editing domain. This is Alanine--tRNA ligase from Clostridium acetobutylicum (strain ATCC 824 / DSM 792 / JCM 1419 / IAM 19013 / LMG 5710 / NBRC 13948 / NRRL B-527 / VKM B-1787 / 2291 / W).